A 257-amino-acid polypeptide reads, in one-letter code: Tryptophan synthase alpha chain (257 aa).

Residues E47 and D58 each act as proton acceptor in the active site.

This sequence belongs to the TrpA family. As to quaternary structure, tetramer of two alpha and two beta chains.

The enzyme catalyses (1S,2R)-1-C-(indol-3-yl)glycerol 3-phosphate + L-serine = D-glyceraldehyde 3-phosphate + L-tryptophan + H2O. It functions in the pathway amino-acid biosynthesis; L-tryptophan biosynthesis; L-tryptophan from chorismate: step 5/5. Functionally, the alpha subunit is responsible for the aldol cleavage of indoleglycerol phosphate to indole and glyceraldehyde 3-phosphate. This Listeria innocua serovar 6a (strain ATCC BAA-680 / CLIP 11262) protein is Tryptophan synthase alpha chain.